Consider the following 439-residue polypeptide: MESWSRCLERLETEFPPEDVHTWLRPLQADQRGDSVVLYAPNPFIIELVEERYLGRLRELLSYFSGIREVVLAIGSRPKTTELPVPVDTTGRLSSTVPFNGNLDTHYNFDNFVEGRSNQLARAAAWQAAQKPGDRTHNPLLLYGGTGLGKTHLMFAAGNVMRQVNPTYKVMYLRSEQFFSAMIRALQDKSMDQFKRQFHQIDALLIDDIQFFAGKDRTQEEFFHTFNALFDGKQQIILTCDRYPREVNGLEPRLKSRLAWGLSVAIDPPDFETRAAIVLAKARERGATIPDEVAFLIAKKMHSNVRDLEGALNTLVARANFTGRAVTIEFSQETLRDLLRAQQQTIGIPNIQKIVADYYGLQIKDLLSKRRTRSLARPRQLAMALAKELTEHSLPEIGDAFAGRDHTTVLHACRQIKLLMETETKLREDWDKLMRKFSE.

Residues 1–75 (MESWSRCLER…GIREVVLAIG (75 aa)) form a domain I, interacts with DnaA modulators region. The tract at residues 75 to 101 (GSRPKTTELPVPVDTTGRLSSTVPFNG) is domain II. The tract at residues 102-319 (NLDTHYNFDN…GALNTLVARA (218 aa)) is domain III, AAA+ region. 4 residues coordinate ATP: glycine 147, glycine 149, lysine 150, and threonine 151. Residues 320 to 439 (NFTGRAVTIE…WDKLMRKFSE (120 aa)) are domain IV, binds dsDNA.

This sequence belongs to the DnaA family. Oligomerizes as a right-handed, spiral filament on DNA at oriC.

Its subcellular location is the cytoplasm. Functionally, plays an essential role in the initiation and regulation of chromosomal replication. ATP-DnaA binds to the origin of replication (oriC) to initiate formation of the DNA replication initiation complex once per cell cycle. Binds the DnaA box (a 9 base pair repeat at the origin) and separates the double-stranded (ds)DNA. Forms a right-handed helical filament on oriC DNA; dsDNA binds to the exterior of the filament while single-stranded (ss)DNA is stabiized in the filament's interior. The ATP-DnaA-oriC complex binds and stabilizes one strand of the AT-rich DNA unwinding element (DUE), permitting loading of DNA polymerase. After initiation quickly degrades to an ADP-DnaA complex that is not apt for DNA replication. Binds acidic phospholipids. The protein is Chromosomal replication initiator protein DnaA of Xylella fastidiosa (strain 9a5c).